The sequence spans 301 residues: tRNA pseudouridine synthase B (301 aa).

The Nucleophile role is filled by Asp-45.

This sequence belongs to the pseudouridine synthase TruB family. Type 1 subfamily.

The catalysed reaction is uridine(55) in tRNA = pseudouridine(55) in tRNA. In terms of biological role, responsible for synthesis of pseudouridine from uracil-55 in the psi GC loop of transfer RNAs. This chain is tRNA pseudouridine synthase B, found in Streptomyces coelicolor (strain ATCC BAA-471 / A3(2) / M145).